Here is a 481-residue protein sequence, read N- to C-terminus: ATP synthase subunit beta, chloroplastic (481 aa).

ATP is bound at residue 161-168 (GGAGVGKT).

It belongs to the ATPase alpha/beta chains family. As to quaternary structure, F-type ATPases have 2 components, CF(1) - the catalytic core - and CF(0) - the membrane proton channel. CF(1) has five subunits: alpha(3), beta(3), gamma(1), delta(1), epsilon(1). CF(0) has four main subunits: a(1), b(1), b'(1) and c(9-12).

Its subcellular location is the plastid. It localises to the chloroplast thylakoid membrane. The enzyme catalyses ATP + H2O + 4 H(+)(in) = ADP + phosphate + 5 H(+)(out). Its function is as follows. Produces ATP from ADP in the presence of a proton gradient across the membrane. The catalytic sites are hosted primarily by the beta subunits. The protein is ATP synthase subunit beta, chloroplastic of Dictyota dichotoma.